A 305-amino-acid chain; its full sequence is UDP-3-O-acyl-N-acetylglucosamine deacetylase (305 aa).

Zn(2+)-binding residues include histidine 78, histidine 237, and aspartate 241. The active-site Proton donor is histidine 264.

This sequence belongs to the LpxC family. The cofactor is Zn(2+).

The catalysed reaction is a UDP-3-O-[(3R)-3-hydroxyacyl]-N-acetyl-alpha-D-glucosamine + H2O = a UDP-3-O-[(3R)-3-hydroxyacyl]-alpha-D-glucosamine + acetate. It participates in glycolipid biosynthesis; lipid IV(A) biosynthesis; lipid IV(A) from (3R)-3-hydroxytetradecanoyl-[acyl-carrier-protein] and UDP-N-acetyl-alpha-D-glucosamine: step 2/6. Catalyzes the hydrolysis of UDP-3-O-myristoyl-N-acetylglucosamine to form UDP-3-O-myristoylglucosamine and acetate, the committed step in lipid A biosynthesis. The polypeptide is UDP-3-O-acyl-N-acetylglucosamine deacetylase (Burkholderia cenocepacia (strain ATCC BAA-245 / DSM 16553 / LMG 16656 / NCTC 13227 / J2315 / CF5610) (Burkholderia cepacia (strain J2315))).